Here is a 436-residue protein sequence, read N- to C-terminus: Testican-3 (436 aa).

Residues 1–22 (MLKVSAVLCVCAAAWCSQSLAA) form the signal peptide. Disulfide bonds link cysteine 90–cysteine 101, cysteine 95–cysteine 111, cysteine 139–cysteine 169, cysteine 142–cysteine 162, cysteine 151–cysteine 183, cysteine 317–cysteine 341, cysteine 352–cysteine 359, and cysteine 361–cysteine 380. The region spanning 133–185 (GPILSTCKQCPVVYPSPVCGSDGHTYSFQCKLEYQACVLGKQISVKCEGHCPC) is the Kazal-like domain. Residues 314-380 (DPPCQTELSN…GSRINGVADC (67 aa)) enclose the Thyroglobulin type-1 domain. 2 O-linked (Xyl...) (glycosaminoglycan) serine glycosylation sites follow: serine 387 and serine 392. Positions 393-436 (GDFHEWTDDEDDEDDIMNDEDEIEDDDEDEGDDDDGGDDHDGYI) are disordered. Positions 399 to 430 (TDDEDDEDDIMNDEDEIEDDDEDEGDDDDGGD) are enriched in acidic residues.

Post-translationally, contains chondroitin sulfate and heparan sulfate O-linked oligosaccharides. As to expression, expressed in brain.

The protein localises to the secreted. The protein resides in the extracellular space. Its subcellular location is the extracellular matrix. Functionally, may participate in diverse steps of neurogenesis. Inhibits the processing of pro-matrix metalloproteinase 2 (MMP-2) by MT1-MMP and MT3-MMP. May interfere with tumor invasion. In Pongo abelii (Sumatran orangutan), this protein is Testican-3 (SPOCK3).